The sequence spans 430 residues: Cell division protein FtsZ (430 aa).

Residues 76 to 80 (GGGCN), 163 to 165 (GTG), Glu194, Arg198, and Asp242 contribute to the GTP site. Residues 374–418 (KEKPQAKTSSKPVLSGPPAGVETVPSTTTPEDPLGEIPMAPELDI) form a disordered region.

The protein belongs to the FtsZ family. As to quaternary structure, homodimer. Polymerizes to form a dynamic ring structure in a strictly GTP-dependent manner. Interacts directly with several other division proteins.

It is found in the cytoplasm. Essential cell division protein that forms a contractile ring structure (Z ring) at the future cell division site. The regulation of the ring assembly controls the timing and the location of cell division. One of the functions of the FtsZ ring is to recruit other cell division proteins to the septum to produce a new cell wall between the dividing cells. Binds GTP and shows GTPase activity. This chain is Cell division protein FtsZ, found in Synechocystis sp. (strain ATCC 27184 / PCC 6803 / Kazusa).